The chain runs to 126 residues: MNTRGCVNNNKMIFMNALGLQPQSKVKIIAHKTLEKFKRDAYTCFKGVKAIKNELKTYNLTLQQYNEALNQCALNDSRWRDTNNWHHDIKEGVKINKRHIYRVNFNSKTKEIKEYYYIKVECYVNN.

It is found in the virion. The protein is Putative 15 kDa capsid protein (P15) of Bombyx mori nuclear polyhedrosis virus (BmNPV).